The primary structure comprises 263 residues: Proteasome subunit alpha type-1 (263 aa).

Met-1 is modified (N-acetylmethionine). The residue at position 110 (Ser-110) is a Phosphoserine; alternate. Ser-110 carries O-linked (GlcNAc) serine; alternate glycosylation. Residue Lys-115 forms a Glycyl lysine isopeptide (Lys-Gly) (interchain with G-Cter in ubiquitin) linkage. Phosphoserine is present on Ser-177. Residue Lys-208 forms a Glycyl lysine isopeptide (Lys-Gly) (interchain with G-Cter in ubiquitin) linkage. Positions 232–263 are disordered; it reads FLEGLEERPQRKAQPAQPADEPAEKADEPMEH. Positions 253–263 are enriched in basic and acidic residues; the sequence is PAEKADEPMEH.

It belongs to the peptidase T1A family. As to quaternary structure, the 26S proteasome consists of a 20S proteasome core and two 19S regulatory subunits. The 20S proteasome core is a barrel-shaped complex made of 28 subunits that are arranged in four stacked rings. The two outer rings are each formed by seven alpha subunits, and the two inner rings are formed by seven beta subunits. The proteolytic activity is exerted by three beta-subunits PSMB5, PSMB6 and PSMB7. Interacts with NOTCH3. Interacts with ZFAND1.

The protein localises to the cytoplasm. The protein resides in the nucleus. In terms of biological role, component of the 20S core proteasome complex involved in the proteolytic degradation of most intracellular proteins. This complex plays numerous essential roles within the cell by associating with different regulatory particles. Associated with two 19S regulatory particles, forms the 26S proteasome and thus participates in the ATP-dependent degradation of ubiquitinated proteins. The 26S proteasome plays a key role in the maintenance of protein homeostasis by removing misfolded or damaged proteins that could impair cellular functions, and by removing proteins whose functions are no longer required. Associated with the PA200 or PA28, the 20S proteasome mediates ubiquitin-independent protein degradation. This type of proteolysis is required in several pathways including spermatogenesis (20S-PA200 complex) or generation of a subset of MHC class I-presented antigenic peptides (20S-PA28 complex). In Macaca fascicularis (Crab-eating macaque), this protein is Proteasome subunit alpha type-1 (PSMA1).